Consider the following 196-residue polypeptide: Putative 3-methyladenine DNA glycosylase (196 aa).

Belongs to the DNA glycosylase MPG family.

This chain is Putative 3-methyladenine DNA glycosylase (yxlJ), found in Bacillus subtilis (strain 168).